The sequence spans 128 residues: Protein BEX2 (128 aa).

The disordered stretch occupies residues 1 to 44 (MMPKEEQVLKNLTMENANEENEKKDEKEQDANKGEPLALSLGAG). The segment covering 20 to 33 (ENEKKDEKEQDANK) has biased composition (basic and acidic residues). Arg-50 carries the post-translational modification Omega-N-methylarginine. Residues 103-128 (QLSHSLRAVSTDPPHHEHNDEFCLMP) form a disordered region. Basic and acidic residues predominate over residues 115-128 (PPHHEHNDEFCLMP). A his cluster region spans residues 117 to 121 (HHEHN). Cys-125 contributes to the Zn(2+) binding site.

The protein belongs to the BEX family. In terms of assembly, interacts with LMO2, possibly leading to regulate the transcriptional activity of a DNA-binding complex containing LMO2. Interacts with OMP.

The protein resides in the cytoplasm. Its subcellular location is the nucleus. Regulator of mitochondrial apoptosis and G1 cell cycle. Regulates the level of PP2A regulatory subunit B and PP2A phosphatase activity. In absence of reductive stress, acts as a pseudosubstrate for the CRL2(FEM1B) complex: associates with FEM1B via zinc, thereby preventing association between FEM1B and its substrates. The sequence is that of Protein BEX2 (BEX2) from Bos taurus (Bovine).